Reading from the N-terminus, the 426-residue chain is 3',5'-cyclic-nucleotide phosphodiesterase (426 aa).

Positions 210–229 (DKEDAQHHSNSNSNSNNIWG) are disordered.

The protein belongs to the cyclic nucleotide phosphodiesterase class-II family.

It catalyses the reaction a nucleoside 3',5'-cyclic phosphate + H2O = a nucleoside 5'-phosphate + H(+). This is 3',5'-cyclic-nucleotide phosphodiesterase (PDE1) from Candida albicans (Yeast).